Consider the following 944-residue polypeptide: Lactoferrin-binding protein A (944 aa).

The first 27 residues, 1-27 (MNKKHGFSLTLTALAIAAAFPSYAANP), serve as a signal peptide directing secretion. The region spanning 52–178 (RRSKEATGLG…LGGAVAFRTK (127 aa)) is the TBDR plug domain. Residues 189-944 (SWGIQAKTAY…NFSLALEMKF (756 aa)) enclose the TBDR beta-barrel domain. The TonB C-terminal box motif lies at 927–944 (GRYAAPGRNFSLALEMKF).

The protein belongs to the TonB-dependent receptor family.

The protein resides in the cell outer membrane. Functionally, unknown. May be an iron-siderophore receptor. The sequence is that of Lactoferrin-binding protein A (lbpA) from Neisseria meningitidis serogroup A / serotype 4A (strain DSM 15465 / Z2491).